A 243-amino-acid polypeptide reads, in one-letter code: Probable transcriptional regulatory protein BP2308 (243 aa).

A disordered region spans residues M1–R21.

This sequence belongs to the TACO1 family.

The protein resides in the cytoplasm. The chain is Probable transcriptional regulatory protein BP2308 from Bordetella pertussis (strain Tohama I / ATCC BAA-589 / NCTC 13251).